Here is a 354-residue protein sequence, read N- to C-terminus: Serum paraoxonase/arylesterase 2 (354 aa).

Cysteines 42 and 352 form a disulfide. Ca(2+) is bound by residues glutamate 53 and aspartate 54. Catalysis depends on histidine 114, which acts as the Proton acceptor. 4 residues coordinate Ca(2+): isoleucine 116, asparagine 167, aspartate 168, and asparagine 223. Asparagine 254 carries N-linked (GlcNAc...) asparagine glycosylation. 2 residues coordinate Ca(2+): aspartate 268 and asparagine 269. N-linked (GlcNAc...) asparagine glycans are attached at residues asparagine 269 and asparagine 323.

It belongs to the paraoxonase family. In terms of assembly, homotrimer. Ca(2+) serves as cofactor. Post-translationally, the signal sequence is not cleaved. Widely expressed with highest expression in liver, lung, placenta, testis and heart.

It is found in the membrane. The catalysed reaction is a phenyl acetate + H2O = a phenol + acetate + H(+). It catalyses the reaction an N-acyl-L-homoserine lactone + H2O = an N-acyl-L-homoserine + H(+). Functionally, capable of hydrolyzing lactones and a number of aromatic carboxylic acid esters. Has antioxidant activity. Is not associated with high density lipoprotein. Prevents LDL lipid peroxidation, reverses the oxidation of mildly oxidized LDL, and inhibits the ability of MM-LDL to induce monocyte chemotaxis. The polypeptide is Serum paraoxonase/arylesterase 2 (PON2) (Homo sapiens (Human)).